We begin with the raw amino-acid sequence, 30 residues long: Cytochrome c oxidase subunit 5C (30 aa).

The chain crosses the membrane as a helical span at residues 15 to 30; it reads VVKELVIXXXLGLXAG.

Belongs to the cytochrome c oxidase subunit 5C family.

Its subcellular location is the mitochondrion inner membrane. Functionally, this protein is one of the nuclear-coded polypeptide chains of cytochrome c oxidase, the terminal oxidase in mitochondrial electron transport. The protein is Cytochrome c oxidase subunit 5C (COX5C) of Solanum tuberosum (Potato).